Reading from the N-terminus, the 552-residue chain is CTP synthase (552 aa).

The segment at methionine 1–methionine 267 is amidoligase domain. CTP is bound at residue serine 13. Serine 13 lines the UTP pocket. Residues serine 14 to isoleucine 19 and aspartate 71 each bind ATP. Mg(2+) is bound by residues aspartate 71 and glutamate 141. CTP is bound by residues aspartate 148–glutamate 150, lysine 188–glutamine 193, and lysine 224. UTP contacts are provided by residues lysine 188–glutamine 193 and lysine 224. The Glutamine amidotransferase type-1 domain maps to aspartate 292–glutamine 534. Glycine 354 contacts L-glutamine. The active-site Nucleophile; for glutamine hydrolysis is cysteine 381. Residues leucine 382 to glutamine 385, glutamate 405, and arginine 462 contribute to the L-glutamine site. Active-site residues include histidine 507 and glutamate 509. Positions serine 533–serine 552 are disordered.

This sequence belongs to the CTP synthase family. In terms of assembly, homotetramer.

It carries out the reaction UTP + L-glutamine + ATP + H2O = CTP + L-glutamate + ADP + phosphate + 2 H(+). The catalysed reaction is L-glutamine + H2O = L-glutamate + NH4(+). The enzyme catalyses UTP + NH4(+) + ATP = CTP + ADP + phosphate + 2 H(+). It functions in the pathway pyrimidine metabolism; CTP biosynthesis via de novo pathway; CTP from UDP: step 2/2. With respect to regulation, allosterically activated by GTP, when glutamine is the substrate; GTP has no effect on the reaction when ammonia is the substrate. The allosteric effector GTP functions by stabilizing the protein conformation that binds the tetrahedral intermediate(s) formed during glutamine hydrolysis. Inhibited by the product CTP, via allosteric rather than competitive inhibition. Its function is as follows. Catalyzes the ATP-dependent amination of UTP to CTP with either L-glutamine or ammonia as the source of nitrogen. Regulates intracellular CTP levels through interactions with the four ribonucleotide triphosphates. This chain is CTP synthase, found in Picosynechococcus sp. (strain ATCC 27264 / PCC 7002 / PR-6) (Agmenellum quadruplicatum).